A 347-amino-acid polypeptide reads, in one-letter code: Dihydroorotase (347 aa).

Histidine 14 and histidine 16 together coordinate Zn(2+). Substrate is bound by residues 16 to 18 (HLR) and asparagine 42. 3 residues coordinate Zn(2+): lysine 100, histidine 137, and histidine 175. N6-carboxylysine is present on lysine 100. Histidine 137 contributes to the substrate binding site. Leucine 220 serves as a coordination point for substrate. Aspartate 248 contributes to the Zn(2+) binding site. Aspartate 248 is a catalytic residue. Histidine 252 and alanine 264 together coordinate substrate.

The protein belongs to the metallo-dependent hydrolases superfamily. DHOase family. Class II DHOase subfamily. As to quaternary structure, homodimer. Zn(2+) is required as a cofactor.

It catalyses the reaction (S)-dihydroorotate + H2O = N-carbamoyl-L-aspartate + H(+). It participates in pyrimidine metabolism; UMP biosynthesis via de novo pathway; (S)-dihydroorotate from bicarbonate: step 3/3. Functionally, catalyzes the reversible cyclization of carbamoyl aspartate to dihydroorotate. In Pseudomonas savastanoi pv. phaseolicola (strain 1448A / Race 6) (Pseudomonas syringae pv. phaseolicola (strain 1448A / Race 6)), this protein is Dihydroorotase.